Here is an 817-residue protein sequence, read N- to C-terminus: Sorting nexin-29 (817 aa).

Residues 37 to 181 (SDSDSRVTCL…ILFAINIDNK (145 aa)) form the RUN domain. 5 positions are modified to phosphoserine: S269, S292, S293, S331, and S345. A disordered region spans residues 271–299 (DDEEDEQSSGDVFKKIPGAGESSEENSDR). Disordered stretches follow at residues 344–381 (KSID…LDAG) and 417–460 (APLG…LPSA). A compositionally biased stretch (acidic residues) spans 347-358 (DDEDADENEDDV). The segment covering 369–378 (GHSESPEKPL) has biased composition (basic and acidic residues). Residues 445–460 (SPPGQESPLSSLLPSA) show a composition bias toward low complexity. S451 carries the phosphoserine modification. Residues 466–546 (MTVSDLRQAI…VLKVQLKKYV (81 aa)) adopt a coiled-coil conformation. S641 carries the post-translational modification Phosphoserine. At T643 the chain carries Phosphothreonine. Phosphoserine occurs at positions 644 and 648. The PX domain occupies 658–781 (ALINVWIPSV…PFFVDITPPG (124 aa)). The disordered stretch occupies residues 784–817 (LTKNSRPKVASRFPKLARGHPRETRNVEPQSGDL).

The protein belongs to the sorting nexin family.

This Bos taurus (Bovine) protein is Sorting nexin-29 (SNX29).